The chain runs to 182 residues: Troponin I, fast skeletal muscle (182 aa).

Gly-2 is modified (N-acetylglycine). Positions 2-48 (GDEEKRNRAITARRQHLKSVMLQIAATELEKEESRRESEKQNYLSEH) are involved in binding TNC. Thr-12 is modified (phosphothreonine). The span at 29–41 (ELEKEESRRESEK) shows a compositional bias: basic and acidic residues. The disordered stretch occupies residues 29-53 (ELEKEESRRESEKQNYLSEHCPPLH). Positions 97–117 (NQKLFDLRGKFKRPPLRRVRM) are involved in binding TNC and actin. Phosphoserine is present on Ser-118.

It belongs to the troponin I family. Binds to actin and tropomyosin.

Troponin I is the inhibitory subunit of troponin, the thin filament regulatory complex which confers calcium-sensitivity to striated muscle actomyosin ATPase activity. The chain is Troponin I, fast skeletal muscle (Tnni2) from Rattus norvegicus (Rat).